A 416-amino-acid polypeptide reads, in one-letter code: Multifunctional CCA protein (416 aa).

2 residues coordinate ATP: G8 and R11. The CTP site is built by G8 and R11. D21 and D23 together coordinate Mg(2+). Positions 91, 137, and 140 each coordinate ATP. Residues R91, R137, and R140 each contribute to the CTP site. Positions 228-329 (TGVHTLMVLA…VKIFDKADFW (102 aa)) constitute an HD domain.

The protein belongs to the tRNA nucleotidyltransferase/poly(A) polymerase family. Bacterial CCA-adding enzyme type 1 subfamily. As to quaternary structure, monomer. Can also form homodimers and oligomers. The cofactor is Mg(2+). Ni(2+) serves as cofactor.

It catalyses the reaction a tRNA precursor + 2 CTP + ATP = a tRNA with a 3' CCA end + 3 diphosphate. The catalysed reaction is a tRNA with a 3' CCA end + 2 CTP + ATP = a tRNA with a 3' CCACCA end + 3 diphosphate. Catalyzes the addition and repair of the essential 3'-terminal CCA sequence in tRNAs without using a nucleic acid template. Adds these three nucleotides in the order of C, C, and A to the tRNA nucleotide-73, using CTP and ATP as substrates and producing inorganic pyrophosphate. tRNA 3'-terminal CCA addition is required both for tRNA processing and repair. Also involved in tRNA surveillance by mediating tandem CCA addition to generate a CCACCA at the 3' terminus of unstable tRNAs. While stable tRNAs receive only 3'-terminal CCA, unstable tRNAs are marked with CCACCA and rapidly degraded. This is Multifunctional CCA protein from Shewanella baltica (strain OS195).